The chain runs to 478 residues: Protein nucleotidyltransferase YdiU (478 aa).

Residues glycine 74, glycine 76, arginine 77, lysine 97, aspartate 109, glycine 110, arginine 160, and arginine 167 each coordinate ATP. The Proton acceptor role is filled by aspartate 236. Mg(2+) contacts are provided by asparagine 237 and aspartate 246. Position 246 (aspartate 246) interacts with ATP.

The protein belongs to the SELO family. Mg(2+) serves as cofactor. It depends on Mn(2+) as a cofactor.

It carries out the reaction L-seryl-[protein] + ATP = 3-O-(5'-adenylyl)-L-seryl-[protein] + diphosphate. The catalysed reaction is L-threonyl-[protein] + ATP = 3-O-(5'-adenylyl)-L-threonyl-[protein] + diphosphate. The enzyme catalyses L-tyrosyl-[protein] + ATP = O-(5'-adenylyl)-L-tyrosyl-[protein] + diphosphate. It catalyses the reaction L-histidyl-[protein] + UTP = N(tele)-(5'-uridylyl)-L-histidyl-[protein] + diphosphate. It carries out the reaction L-seryl-[protein] + UTP = O-(5'-uridylyl)-L-seryl-[protein] + diphosphate. The catalysed reaction is L-tyrosyl-[protein] + UTP = O-(5'-uridylyl)-L-tyrosyl-[protein] + diphosphate. Functionally, nucleotidyltransferase involved in the post-translational modification of proteins. It can catalyze the addition of adenosine monophosphate (AMP) or uridine monophosphate (UMP) to a protein, resulting in modifications known as AMPylation and UMPylation. The chain is Protein nucleotidyltransferase YdiU from Chromobacterium violaceum (strain ATCC 12472 / DSM 30191 / JCM 1249 / CCUG 213 / NBRC 12614 / NCIMB 9131 / NCTC 9757 / MK).